Here is a 291-residue protein sequence, read N- to C-terminus: Venom metalloproteinase inhibitor DM43 (291 aa).

2 consecutive Ig-like V-type domains span residues 22–79 (TNVT…ILTS) and 114–171 (GLET…PASA). N23 carries N-linked (GlcNAc...) asparagine glycosylation. 2 disulfide bridges follow: C28–C74 and C121–C163. N-linked (GlcNAc...) asparagine glycosylation is found at N156, N160, and N175. Residues 191–288 (PKANFYILND…DSNVLELDLS (98 aa)) form the Ig-like V-type 3 domain. C213 and C265 are oxidised to a cystine.

In terms of assembly, homodimer. In terms of processing, N-glycosylated. As to expression, blood and milk.

In terms of biological role, metalloproteinase inhibitor. The polypeptide is Venom metalloproteinase inhibitor DM43 (Didelphis marsupialis (Southern opossum)).